The sequence spans 123 residues: Small ribosomal subunit protein uS12 (123 aa).

D89 bears the 3-methylthioaspartic acid mark.

It belongs to the universal ribosomal protein uS12 family. Part of the 30S ribosomal subunit. Contacts proteins S8 and S17. May interact with IF1 in the 30S initiation complex.

In terms of biological role, with S4 and S5 plays an important role in translational accuracy. Functionally, interacts with and stabilizes bases of the 16S rRNA that are involved in tRNA selection in the A site and with the mRNA backbone. Located at the interface of the 30S and 50S subunits, it traverses the body of the 30S subunit contacting proteins on the other side and probably holding the rRNA structure together. The combined cluster of proteins S8, S12 and S17 appears to hold together the shoulder and platform of the 30S subunit. The protein is Small ribosomal subunit protein uS12 of Desulfovibrio desulfuricans (strain ATCC 27774 / DSM 6949 / MB).